The primary structure comprises 545 residues: Carboxypeptidase Y homolog A (545 aa).

A signal peptide spans 1–17 (MKSLALALLVGGAIAAG). A propeptide spanning residues 18–123 (PQQQVLQAPV…KLEAYDLRVK (106 aa)) is cleaved from the precursor. Disulfide bonds link Cys-177/Cys-416, Cys-311/Cys-325, Cys-335/Cys-358, Cys-342/Cys-351, and Cys-380/Cys-386. A glycan (N-linked (GlcNAc...) asparagine) is linked at Asn-208. Residue Ser-264 is part of the active site. Asp-455 is a catalytic residue. 3 N-linked (GlcNAc...) asparagine glycosylation sites follow: Asn-485, Asn-491, and Asn-506. His-517 is an active-site residue.

It belongs to the peptidase S10 family.

The protein localises to the vacuole. It carries out the reaction Release of a C-terminal amino acid with broad specificity.. Vacuolar carboxypeptidase involved in degradation of small peptides. Digests preferentially peptides containing an aliphatic or hydrophobic residue in P1' position, as well as methionine, leucine or phenylalanine in P1 position of ester substrate. In Ajellomyces dermatitidis (strain ER-3 / ATCC MYA-2586) (Blastomyces dermatitidis), this protein is Carboxypeptidase Y homolog A (CPYA).